Reading from the N-terminus, the 231-residue chain is Cytochrome c oxidase subunit 2 (231 aa).

Topologically, residues 1–14 (MAHPSQLGLQDAAS) are mitochondrial intermembrane. The helical transmembrane segment at 15 to 45 (PVMEELLHFHDHALMIVFLISTLVFYIILAM) threads the bilayer. Topologically, residues 46 to 59 (MTTKMTDKYILDAQ) are mitochondrial matrix. Residues 60–87 (EIEIVWTLLPAIVLILVALPSLRILYLI) traverse the membrane as a helical segment. At 88–231 (DEVENPHLTI…WSSSMLEEAX (144 aa)) the chain is on the mitochondrial intermembrane side. 6 residues coordinate Cu cation: histidine 161, cysteine 196, glutamate 198, cysteine 200, histidine 204, and methionine 207. Mg(2+) is bound at residue glutamate 198.

It belongs to the cytochrome c oxidase subunit 2 family. Component of the cytochrome c oxidase (complex IV, CIV), a multisubunit enzyme composed of 14 subunits. The complex is composed of a catalytic core of 3 subunits MT-CO1, MT-CO2 and MT-CO3, encoded in the mitochondrial DNA, and 11 supernumerary subunits COX4I, COX5A, COX5B, COX6A, COX6B, COX6C, COX7A, COX7B, COX7C, COX8 and NDUFA4, which are encoded in the nuclear genome. The complex exists as a monomer or a dimer and forms supercomplexes (SCs) in the inner mitochondrial membrane with NADH-ubiquinone oxidoreductase (complex I, CI) and ubiquinol-cytochrome c oxidoreductase (cytochrome b-c1 complex, complex III, CIII), resulting in different assemblies (supercomplex SCI(1)III(2)IV(1) and megacomplex MCI(2)III(2)IV(2)). Found in a complex with TMEM177, COA6, COX18, COX20, SCO1 and SCO2. Interacts with TMEM177 in a COX20-dependent manner. Interacts with COX20. Interacts with COX16. Cu cation serves as cofactor.

It is found in the mitochondrion inner membrane. The catalysed reaction is 4 Fe(II)-[cytochrome c] + O2 + 8 H(+)(in) = 4 Fe(III)-[cytochrome c] + 2 H2O + 4 H(+)(out). Functionally, component of the cytochrome c oxidase, the last enzyme in the mitochondrial electron transport chain which drives oxidative phosphorylation. The respiratory chain contains 3 multisubunit complexes succinate dehydrogenase (complex II, CII), ubiquinol-cytochrome c oxidoreductase (cytochrome b-c1 complex, complex III, CIII) and cytochrome c oxidase (complex IV, CIV), that cooperate to transfer electrons derived from NADH and succinate to molecular oxygen, creating an electrochemical gradient over the inner membrane that drives transmembrane transport and the ATP synthase. Cytochrome c oxidase is the component of the respiratory chain that catalyzes the reduction of oxygen to water. Electrons originating from reduced cytochrome c in the intermembrane space (IMS) are transferred via the dinuclear copper A center (CU(A)) of subunit 2 and heme A of subunit 1 to the active site in subunit 1, a binuclear center (BNC) formed by heme A3 and copper B (CU(B)). The BNC reduces molecular oxygen to 2 water molecules using 4 electrons from cytochrome c in the IMS and 4 protons from the mitochondrial matrix. The chain is Cytochrome c oxidase subunit 2 (MT-CO2) from Latimeria chalumnae (Coelacanth).